Here is a 363-residue protein sequence, read N- to C-terminus: Adenylate cyclase 2 (363 aa).

Positions 157-286 (VFLFIDLAGS…DTVNTTARLE (130 aa)) constitute a Guanylate cyclase domain. The Mg(2+) site is built by D162 and D206. Residues 341–363 (GDGATEPAGETVRSPAAEAFTSL) form a disordered region.

It belongs to the adenylyl cyclase class-3 family. It depends on Mg(2+) as a cofactor.

The catalysed reaction is ATP = 3',5'-cyclic AMP + diphosphate. Functionally, plays essential roles in regulation of cellular metabolism by catalyzing the synthesis of a second messenger, cAMP. The protein is Adenylate cyclase 2 (cya2) of Rhizobium meliloti (strain 1021) (Ensifer meliloti).